Consider the following 200-residue polypeptide: Recombination protein RecR (200 aa).

A C4-type zinc finger spans residues 58 to 73 (CSLCCNLTDEDPCSIC). A Toprim domain is found at 81-176 (NLLCVVEEPR…KVTRIAHGIP (96 aa)).

Belongs to the RecR family.

May play a role in DNA repair. It seems to be involved in an RecBC-independent recombinational process of DNA repair. It may act with RecF and RecO. This is Recombination protein RecR from Desulforamulus reducens (strain ATCC BAA-1160 / DSM 100696 / MI-1) (Desulfotomaculum reducens).